The sequence spans 715 residues: Fatty acid oxidation complex subunit alpha (715 aa).

Residues 1 to 190 (MIYEGKAITV…KVSAVDAVVT (190 aa)) are enoyl-CoA hydratase/isomerase. Substrate is bound at residue D297. Residues 312–715 (KDVKQAAVLG…MAKNGQSFFG (404 aa)) form a 3-hydroxyacyl-CoA dehydrogenase region. Residues M325, D344, 401-403 (VVE), K408, and S430 each bind NAD(+). Catalysis depends on H451, which acts as the For 3-hydroxyacyl-CoA dehydrogenase activity. N454 contacts NAD(+). Positions 501 and 660 each coordinate substrate.

This sequence in the N-terminal section; belongs to the enoyl-CoA hydratase/isomerase family. It in the C-terminal section; belongs to the 3-hydroxyacyl-CoA dehydrogenase family. In terms of assembly, heterotetramer of two alpha chains (FadB) and two beta chains (FadA).

It catalyses the reaction a (3S)-3-hydroxyacyl-CoA + NAD(+) = a 3-oxoacyl-CoA + NADH + H(+). The enzyme catalyses a (3S)-3-hydroxyacyl-CoA = a (2E)-enoyl-CoA + H2O. It carries out the reaction a 4-saturated-(3S)-3-hydroxyacyl-CoA = a (3E)-enoyl-CoA + H2O. The catalysed reaction is (3S)-3-hydroxybutanoyl-CoA = (3R)-3-hydroxybutanoyl-CoA. It catalyses the reaction a (3Z)-enoyl-CoA = a 4-saturated (2E)-enoyl-CoA. The enzyme catalyses a (3E)-enoyl-CoA = a 4-saturated (2E)-enoyl-CoA. It functions in the pathway lipid metabolism; fatty acid beta-oxidation. Functionally, involved in the aerobic and anaerobic degradation of long-chain fatty acids via beta-oxidation cycle. Catalyzes the formation of 3-oxoacyl-CoA from enoyl-CoA via L-3-hydroxyacyl-CoA. It can also use D-3-hydroxyacyl-CoA and cis-3-enoyl-CoA as substrate. This chain is Fatty acid oxidation complex subunit alpha, found in Pseudomonas fragi.